The primary structure comprises 188 residues: Putative manganese efflux pump MntP (188 aa).

The next 6 helical transmembrane spans lie at 3 to 23, 39 to 59, 65 to 85, 104 to 124, 125 to 145, and 167 to 187; these read MITL…VALG, LGWH…LAGL, IETY…GKMI, GMSL…VGLS, LAIV…IAGV, and IAGG…HTLG.

This sequence belongs to the MntP (TC 9.B.29) family.

It localises to the cell inner membrane. Probably functions as a manganese efflux pump. In Syntrophotalea carbinolica (strain DSM 2380 / NBRC 103641 / GraBd1) (Pelobacter carbinolicus), this protein is Putative manganese efflux pump MntP.